Here is a 484-residue protein sequence, read N- to C-terminus: Glutamate--tRNA ligase (484 aa).

A 'HIGH' region motif is present at residues 11 to 21 (PSPTGLLHIGN). A 'KMSKS' region motif is present at residues 255–259 (KLSKR). An ATP-binding site is contributed by lysine 258.

This sequence belongs to the class-I aminoacyl-tRNA synthetase family. Glutamate--tRNA ligase type 1 subfamily. Monomer.

The protein localises to the cytoplasm. It carries out the reaction tRNA(Glu) + L-glutamate + ATP = L-glutamyl-tRNA(Glu) + AMP + diphosphate. Functionally, catalyzes the attachment of glutamate to tRNA(Glu) in a two-step reaction: glutamate is first activated by ATP to form Glu-AMP and then transferred to the acceptor end of tRNA(Glu). The chain is Glutamate--tRNA ligase from Streptococcus agalactiae serotype V (strain ATCC BAA-611 / 2603 V/R).